The following is a 428-amino-acid chain: Light-independent protochlorophyllide reductase subunit N (428 aa).

3 residues coordinate [4Fe-4S] cluster: cysteine 29, cysteine 54, and cysteine 115.

Belongs to the BchN/ChlN family. As to quaternary structure, protochlorophyllide reductase is composed of three subunits; BchL, BchN and BchB. Forms a heterotetramer of two BchB and two BchN subunits. Requires [4Fe-4S] cluster as cofactor.

It carries out the reaction chlorophyllide a + oxidized 2[4Fe-4S]-[ferredoxin] + 2 ADP + 2 phosphate = protochlorophyllide a + reduced 2[4Fe-4S]-[ferredoxin] + 2 ATP + 2 H2O. It functions in the pathway porphyrin-containing compound metabolism; bacteriochlorophyll biosynthesis (light-independent). Functionally, component of the dark-operative protochlorophyllide reductase (DPOR) that uses Mg-ATP and reduced ferredoxin to reduce ring D of protochlorophyllide (Pchlide) to form chlorophyllide a (Chlide). This reaction is light-independent. The NB-protein (BchN-BchB) is the catalytic component of the complex. The protein is Light-independent protochlorophyllide reductase subunit N of Cereibacter sphaeroides (strain ATCC 17029 / ATH 2.4.9) (Rhodobacter sphaeroides).